We begin with the raw amino-acid sequence, 286 residues long: Aquaporin PIP1-1 (286 aa).

Met-1 is subject to N-acetylmethionine. Positions 1–34 are disordered; it reads MEGKEEDVRVGANKFPERQPIGTSAQSDKDYKEP. Topologically, residues 1–54 are cytoplasmic; it reads MEGKEEDVRVGANKFPERQPIGTSAQSDKDYKEPPPAPFFEPGELSSWSFWRAG. The helical transmembrane segment at 55–75 threads the bilayer; the sequence is IAEFIATFLFLYITVLTVMGV. Residues 76–91 are Extracellular-facing; sequence KRSPNMCASVGIQGIA. Residues 92 to 112 form a helical membrane-spanning segment; the sequence is WAFGGMIFALVYCTAGISGGH. Topologically, residues 113-132 are cytoplasmic; that stretch reads INPAVTFGLFLARKLSLTRA. The short motif at 114–116 is the NPA 1 element; sequence NPA. The helical transmembrane segment at 133 to 153 threads the bilayer; that stretch reads LYYIVMQCLGAICGAGVVKGF. At 154–174 the chain is on the extracellular side; sequence QPKQYQALGGGANTVAHGYTK. The helical transmembrane segment at 175–195 threads the bilayer; sequence GSGLGAEIIGTFVLVYTVFSA. At 196–208 the chain is on the cytoplasmic side; the sequence is TDAKRNARDSHVP. Residues 209-229 form a helical membrane-spanning segment; that stretch reads ILAPLPIGFAVFLVHLATIPI. The Extracellular segment spans residues 230 to 256; sequence TGTGINPARSLGAAIIYNKDHSWDDHW. The NPA 2 signature appears at 235 to 237; that stretch reads NPA. A helical membrane pass occupies residues 257–277; sequence VFWVGPFIGAALAALYHVVVI. Residues 278 to 286 lie on the Cytoplasmic side of the membrane; that stretch reads RAIPFKSRS. At Ser-284 the chain carries Phosphoserine.

The protein belongs to the MIP/aquaporin (TC 1.A.8) family. PIP (TC 1.A.8.11) subfamily. Widely expressed. Expressed in roots, above ground and in flower buds.

The protein localises to the cell membrane. Water channel required to facilitate the transport of water across cell membrane. Its function is impaired by Hg(2+). This Arabidopsis thaliana (Mouse-ear cress) protein is Aquaporin PIP1-1 (PIP1-1).